The chain runs to 165 residues: Large ribosomal subunit protein uL5 (165 aa).

This sequence belongs to the universal ribosomal protein uL5 family. Part of the 50S ribosomal subunit; contacts the 5S rRNA and probably tRNA. Forms a bridge to the 30S subunit in the 70S ribosome.

Functionally, this is one of the proteins that bind and probably mediate the attachment of the 5S RNA into the large ribosomal subunit, where it forms part of the central protuberance. In the 70S ribosome it contacts protein S13 of the 30S subunit (bridge B1b), connecting the 2 subunits; this bridge is implicated in subunit movement. May contact the P site tRNA; the 5S rRNA and some of its associated proteins might help stabilize positioning of ribosome-bound tRNAs. This is Large ribosomal subunit protein uL5 from Methanosarcina acetivorans (strain ATCC 35395 / DSM 2834 / JCM 12185 / C2A).